The primary structure comprises 212 residues: 3-demethoxyubiquinol 3-hydroxylase (212 aa).

Residues Glu-61, Glu-91, His-94, Glu-143, Glu-175, and His-178 each contribute to the Fe cation site.

The protein belongs to the COQ7 family. Requires Fe cation as cofactor.

The protein localises to the cell membrane. It catalyses the reaction a 5-methoxy-2-methyl-3-(all-trans-polyprenyl)benzene-1,4-diol + AH2 + O2 = a 3-demethylubiquinol + A + H2O. Its pathway is cofactor biosynthesis; ubiquinone biosynthesis. Catalyzes the hydroxylation of 2-nonaprenyl-3-methyl-6-methoxy-1,4-benzoquinol during ubiquinone biosynthesis. The sequence is that of 3-demethoxyubiquinol 3-hydroxylase from Paraburkholderia phytofirmans (strain DSM 17436 / LMG 22146 / PsJN) (Burkholderia phytofirmans).